The sequence spans 355 residues: GTPase Obg (355 aa).

The 159-residue stretch at 1–159 (MKLVDEAEIL…RLLKLELKLL (159 aa)) folds into the Obg domain. Residues 160 to 342 (ADVGLLGFPN…IMKDVMAFFD (183 aa)) form the OBG-type G domain. Residues 166–173 (GFPNAGKS), 191–195 (FTTLY), 213–216 (DVPG), 292–295 (NKAD), and 323–325 (SAL) contribute to the GTP site. 2 residues coordinate Mg(2+): S173 and T193.

It belongs to the TRAFAC class OBG-HflX-like GTPase superfamily. OBG GTPase family. As to quaternary structure, monomer. Mg(2+) serves as cofactor.

The protein localises to the cytoplasm. Functionally, an essential GTPase which binds GTP, GDP and possibly (p)ppGpp with moderate affinity, with high nucleotide exchange rates and a fairly low GTP hydrolysis rate. Plays a role in control of the cell cycle, stress response, ribosome biogenesis and in those bacteria that undergo differentiation, in morphogenesis control. The protein is GTPase Obg of Xanthomonas euvesicatoria pv. vesicatoria (strain 85-10) (Xanthomonas campestris pv. vesicatoria).